Here is a 1470-residue protein sequence, read N- to C-terminus: Isonitrile lipopeptide synthase (1470 aa).

The interval 584 to 603 (PEPESQEAARPTAPAPTAPA) is disordered. Residues 974–1049 (AHDSTLERTI…ELARFLKQQE (76 aa)) enclose the Carrier domain. At S1009 the chain carries O-(pantetheine 4'-phosphoryl)serine. Low complexity predominate over residues 1049–1059 (EQQAHAQVQPR). Positions 1049-1070 (EQQAHAQVQPRPAGPGLPPTLL) are disordered.

This sequence belongs to the ATP-dependent AMP-binding enzyme family. Pantetheine 4'-phosphate is required as a cofactor.

The enzyme catalyses 2 a (3R)-3-isocyanyl-fatty acyl-[ACP] + L-lysine + ATP + 2 NADPH = an isonitrile lipopeptide + 2 holo-[ACP] + AMP + diphosphate + 2 NADP(+). The catalysed reaction is 2 (3R)-3-isocyanylbutanoyl-[ACP] + L-lysine + ATP + 2 NADPH = (2S)-2,6-bis[(3R)-3-isocyanobutanamido]hexan-1-ol + 2 holo-[ACP] + AMP + diphosphate + 2 NADP(+). Nonribosomal peptide synthetase (NRPS) involved in the biosynthesis of a unique class of isonitrile lipopeptides (INLPs). Catalyzes the final step in the pathway, i.e. the condensation of a (3R)-3-isocyanyl-fatty acyl-[ACP] to both amino groups of a lysine, producing isonitrile lipopeptides. Can use (3R)-3-isocyanylbutanoyl-[ACP] as substrate, leading to (2S)-2,6-bis[(3R)-3-isocyanobutanamido]hexan-1-ol. The sequence is that of Isonitrile lipopeptide synthase from Streptomyces coeruleorubidus.